Consider the following 734-residue polypeptide: MALLILLFLLPSPLHSQHTCSISKVTSLLEVNCENKKLTALPADLPADTGILHLGENQLGTFSTASLVHFTHLTYLYLDRCELTSLQTNGKLIKLENLDLSHNNLKSLPSLGWALPALTTLDVSFNKLGSLSPGVLDGLSQLQELYLQNNDLKSLPPGLLLPTTKLKKLNLANNKLRELPSGLLDGLEDLDTLYLQRNWLRTIPKGFFGTLLLPFVFLHANSWYCDCEILYFRHWLQENANNVYLWKQGVDVKDTTPNVASVRCANLDNAPVYSYPGKGCPTSSGDTDYDDYDDIPDVPATRTEVKFSTNTKVHTTHWSLLAAAPSTSQDSQMISLPPTHKPTKKQSTFIHTQSPGFTTLPETMESNPTFYSLKLNTVLIPSPTTLEPTSTQATPEPNIQPMLTTSTLTTPEHSTTPVPTTTILTTPEHSTIPVPTTAILTTPKPSTIPVPTTATLTTLEPSTTPVPTTATLTTPEPSTTLVPTTATLTTPEHSTTPVPTTATLTTPEHSTTPVPTTATLTTPEPSTTLTNLVSTISPVLTTTLTTPESTPIETILEQFFTTELTLLPTLESTTTIIPEQNSFLNLPEVALVSSDTSESSPFLNSDFCCFLPLGFYVLGLLWLLFASVVLILLLTWTWHVTPHSLDMEQSAALATSTHTTSLEVQRARQVTMPRAWLLFLQGSLPTFRSSLFLWVRPNGRVGPLVAGRRPSALSQGRGQDLLGTVGIRYSGHSL.

An N-terminal signal peptide occupies residues 1-16; the sequence is MALLILLFLLPSPLHS. An LRRNT domain is found at 17–47; it reads QHTCSISKVTSLLEVNCENKKLTALPADLPA. Over 17-612 the chain is Extracellular; the sequence is QHTCSISKVT…LNSDFCCFLP (596 aa). A disulfide bridge connects residues Cys20 and Cys33. LRR repeat units lie at residues 48–69, 72–93, 94–115, 117–140, 141–162, 165–188, and 189–210; these read DTGI…SLVH, HLTY…GKLI, KLEN…GWAL, ALTT…DGLS, QLQE…LLLP, KLKK…DGLE, and DLDT…FFGT. The LRRCT domain occupies 221–282; sequence NSWYCDCEIL…YSYPGKGCPT (62 aa). Disulfide bonds link Cys225–Cys264 and Cys227–Cys280. A Sulfotyrosine modification is found at Tyr292. 4 O-linked (GalNAc...) threonine glycosylation sites follow: Thr301, Thr311, Thr315, and Thr316. O-linked (GalNAc...) serine glycosylation is present at Ser335. Residues Thr339, Thr348, Thr358, and Thr377 are each glycosylated (O-linked (GalNAc...) threonine). O-linked (GalNAc...) serine glycosylation is present at Ser382. O-linked (GalNAc...) threonine glycans are attached at residues Thr384, Thr385, and Thr405. 2 disordered regions span residues 406–429 and 460–526; these read STLT…TPEH and EPST…PEPS. 8 O-linked (GalNAc...) threonine glycosylation sites follow: Thr512, Thr516, Thr519, Thr530, Thr542, Thr546, Thr550, and Thr562. The O-linked (GalNAc...) serine glycan is linked to Ser572. A glycan (O-linked (GalNAc...) threonine) is linked at Thr573. A helical transmembrane segment spans residues 613 to 633; that stretch reads LGFYVLGLLWLLFASVVLILL. Over 634–734 the chain is Cytoplasmic; sequence LTWTWHVTPH…VGIRYSGHSL (101 aa). Phosphoserine occurs at positions 711 and 714.

Two GP-Ib beta are disulfide-linked to one GP-Ib alpha. GP-IX is complexed with the GP-Ib heterodimer via a non covalent linkage. Interacts with FLNB. Interacts with FLNA (via filamin repeats 4, 9, 12, 17, 19, 21, and 23). O-glycosylated. Post-translationally, glycocalicin is the product of a proteolytic cleavage/shedding, catalyzed by ADAM17, which releases most of the extracellular domain. Binding sites for vWF and thrombin are in this part of the protein.

The protein localises to the membrane. In terms of biological role, GP-Ib, a surface membrane protein of platelets, participates in the formation of platelet plugs by binding to the A1 domain of vWF, which is already bound to the subendothelium. The sequence is that of Platelet glycoprotein Ib alpha chain (Gp1ba) from Mus musculus (Mouse).